A 195-amino-acid chain; its full sequence is Dephospho-CoA kinase (195 aa).

The DPCK domain maps to 4–195; sequence IIGLTGGIAS…EQILDALQRL (192 aa). Residue 12-17 participates in ATP binding; it reads ASGKST.

The protein belongs to the CoaE family.

Its subcellular location is the cytoplasm. The enzyme catalyses 3'-dephospho-CoA + ATP = ADP + CoA + H(+). Its pathway is cofactor biosynthesis; coenzyme A biosynthesis; CoA from (R)-pantothenate: step 5/5. Catalyzes the phosphorylation of the 3'-hydroxyl group of dephosphocoenzyme A to form coenzyme A. This Streptococcus agalactiae serotype III (strain NEM316) protein is Dephospho-CoA kinase.